We begin with the raw amino-acid sequence, 238 residues long: tRNA (guanine-N(7)-)-methyltransferase (238 aa).

Residues E68, E93, D120, and D143 each contribute to the S-adenosyl-L-methionine site. Residue D143 is part of the active site. Substrate contacts are provided by residues K147, D179, and 216–219 (TKFE).

This sequence belongs to the class I-like SAM-binding methyltransferase superfamily. TrmB family.

The enzyme catalyses guanosine(46) in tRNA + S-adenosyl-L-methionine = N(7)-methylguanosine(46) in tRNA + S-adenosyl-L-homocysteine. It functions in the pathway tRNA modification; N(7)-methylguanine-tRNA biosynthesis. Catalyzes the formation of N(7)-methylguanine at position 46 (m7G46) in tRNA. This chain is tRNA (guanine-N(7)-)-methyltransferase, found in Shewanella baltica (strain OS155 / ATCC BAA-1091).